The following is a 276-amino-acid chain: Ribosomal RNA small subunit methyltransferase A (276 aa).

Residues N16, L18, G43, E64, D89, and N109 each coordinate S-adenosyl-L-methionine.

This sequence belongs to the class I-like SAM-binding methyltransferase superfamily. rRNA adenine N(6)-methyltransferase family. RsmA subfamily.

The protein resides in the cytoplasm. The catalysed reaction is adenosine(1518)/adenosine(1519) in 16S rRNA + 4 S-adenosyl-L-methionine = N(6)-dimethyladenosine(1518)/N(6)-dimethyladenosine(1519) in 16S rRNA + 4 S-adenosyl-L-homocysteine + 4 H(+). Specifically dimethylates two adjacent adenosines (A1518 and A1519) in the loop of a conserved hairpin near the 3'-end of 16S rRNA in the 30S particle. May play a critical role in biogenesis of 30S subunits. The sequence is that of Ribosomal RNA small subunit methyltransferase A from Marinobacter nauticus (strain ATCC 700491 / DSM 11845 / VT8) (Marinobacter aquaeolei).